A 73-amino-acid polypeptide reads, in one-letter code: UPF0346 protein SH1485 (73 aa).

The protein belongs to the UPF0346 family.

This chain is UPF0346 protein SH1485, found in Staphylococcus haemolyticus (strain JCSC1435).